We begin with the raw amino-acid sequence, 60 residues long: DNA-binding protein 7c (60 aa).

The segment at 37–60 (DNGKTGRGAVSEKDAPKELLEKLK) is disordered. The segment covering 46-60 (VSEKDAPKELLEKLK) has biased composition (basic and acidic residues).

It belongs to the 7 kDa DNA-binding/endoribonuclease P2 family. As to quaternary structure, monomer.

It is found in the cytoplasm. In terms of biological role, can constrain negative DNA supercoils. May be involved in maintaining the integrity of the genome at high temperature. In Acidianus hospitalis (strain W1), this protein is DNA-binding protein 7c.